A 244-amino-acid polypeptide reads, in one-letter code: Phosphoadenosine 5'-phosphosulfate reductase (244 aa).

The active-site Nucleophile; cysteine thiosulfonate intermediate is the Cys239.

It belongs to the PAPS reductase family. CysH subfamily.

It is found in the cytoplasm. The enzyme catalyses [thioredoxin]-disulfide + sulfite + adenosine 3',5'-bisphosphate + 2 H(+) = [thioredoxin]-dithiol + 3'-phosphoadenylyl sulfate. The protein operates within sulfur metabolism; hydrogen sulfide biosynthesis; sulfite from sulfate: step 3/3. Catalyzes the formation of sulfite from phosphoadenosine 5'-phosphosulfate (PAPS) using thioredoxin as an electron donor. The chain is Phosphoadenosine 5'-phosphosulfate reductase from Klebsiella pneumoniae subsp. pneumoniae (strain ATCC 700721 / MGH 78578).